A 358-amino-acid chain; its full sequence is Protein Wnt-8 (358 aa).

A signal peptide spans 1 to 22 (MQNTTLFILATLLIFCPFFTAS). Cys-55 and Cys-66 form a disulfide bridge. Residue Asn-104 is glycosylated (N-linked (GlcNAc...) asparagine). Cystine bridges form between Cys-105/Cys-113, Cys-115/Cys-133, Cys-181/Cys-195, Cys-183/Cys-190, Cys-260/Cys-298, Cys-276/Cys-291, Cys-295/Cys-337, Cys-313/Cys-328, Cys-315/Cys-325, and Cys-320/Cys-321. Ser-187 is lipidated: O-palmitoleoyl serine. N-linked (GlcNAc...) asparagine glycans are attached at residues Asn-263 and Asn-282.

Belongs to the Wnt family. In terms of assembly, homooligomer; disulfide-linked, leading to inactivation. Interacts with the long chain of cer1. In terms of processing, palmitoleoylation is required for efficient binding to frizzled receptors. Depalmitoleoylation leads to Wnt signaling pathway inhibition. Proteolytic processing by tiki1 and tiki2 promotes oxidation and formation of large disulfide-bond oligomers, leading to inactivation of wnt8.

It is found in the secreted. Its subcellular location is the extracellular space. The protein localises to the extracellular matrix. Functionally, ligand for members of the frizzled family of seven transmembrane receptors. Plays a role in ventral mesodermal patterning during embryogenesis. Mimics Nieuwkoop center activity. Causes dorsal mesodermal differentiation of animal cap ectoderm when coexpressed with noggin and nuclear, sequence-specific DNA-binding protein xBra. None of these molecules causes dorsal mesoderm formation when expressed alone. This is Protein Wnt-8 (wnt8) from Xenopus laevis (African clawed frog).